We begin with the raw amino-acid sequence, 148 residues long: Cofilin/actin-depolymerizing factor homolog (148 aa).

Positions G4 to R143 constitute an ADF-H domain. A Nuclear localization signal motif is present at residues K19–K23.

The protein belongs to the actin-binding proteins ADF family. Post-translationally, phosphorylated in vitro by protein kinase LIMK1. Phosphorylation is required for inactivation of tsr and for cell proliferation and axon growth. Phosphorylation is negatively regulated by the panthothenate kinase fbl which catalyzes the first step in the conversion of panthothenic acid to coenzyme A. Dephosphorylated by protein phosphatase ssh which activates tsr.

It localises to the cytoplasm. The protein resides in the cytoskeleton. It is found in the nucleus matrix. Its function is as follows. Exhibits F-actin depolymerizing activity and regulates actin cytoskeleton dynamics. Required for cytokinesis in both mitotic and meiotic cells and for aster migration and separation. Promotes cell motility during ovary development and oogenesis. During larval development, required for the cell rearrangement needed for formation of terminal filaments which are stacks of somatic cells that are important for the initiation of ovarioles. Also required for border cell migration during oogenesis. During border cell migration, required for actin turnover and lamellipodial protrusion. Required for the establishment of planar cell polarity (PCP) where cells adopt a uniform orientation within the plane of an epithelium. During establishment of PCP, required for the redistribution of the PCP core proteins fz and stan/fmi to the proximodistal cell boundary. During pupal development, required for elongation of the retinal cell body and for rhabdomere morphogenesis. Required for mushroom body neuroblast proliferation and axon growth. Plays a role in the positive regulation of protein secretion. Plays a role in the regulation of nuclear localization of actin. Required for the maintenance of epithelial integrity by controlling cell junctions and is also necessary for cell survival and tissue growth through regulation of JNK and yki signaling. In Drosophila melanogaster (Fruit fly), this protein is Cofilin/actin-depolymerizing factor homolog.